The sequence spans 29 residues: Varv peptide F (29 aa).

Residues 1–29 (GVPICGETCTLGTCYTAGCSCSWPVCTRN) constitute a cross-link (cyclopeptide (Gly-Asn)). Disulfide bonds link cysteine 5–cysteine 19, cysteine 9–cysteine 21, and cysteine 14–cysteine 26.

In terms of processing, this is a cyclic peptide.

In terms of biological role, probably participates in a plant defense mechanism. Has cytotoxic activity against a variety of drug-resistant and drug-sensitive human tumor cell lines. The polypeptide is Varv peptide F (Viola arvensis (European field pansy)).